A 445-amino-acid chain; its full sequence is Methylenetetrahydrofolate--tRNA-(uracil-5-)-methyltransferase TrmFO (445 aa).

Position 10-15 (10-15) interacts with FAD; the sequence is GGGLAG.

This sequence belongs to the MnmG family. TrmFO subfamily. Requires FAD as cofactor.

It is found in the cytoplasm. It catalyses the reaction uridine(54) in tRNA + (6R)-5,10-methylene-5,6,7,8-tetrahydrofolate + NADH + H(+) = 5-methyluridine(54) in tRNA + (6S)-5,6,7,8-tetrahydrofolate + NAD(+). It carries out the reaction uridine(54) in tRNA + (6R)-5,10-methylene-5,6,7,8-tetrahydrofolate + NADPH + H(+) = 5-methyluridine(54) in tRNA + (6S)-5,6,7,8-tetrahydrofolate + NADP(+). Its function is as follows. Catalyzes the folate-dependent formation of 5-methyl-uridine at position 54 (M-5-U54) in all tRNAs. The protein is Methylenetetrahydrofolate--tRNA-(uracil-5-)-methyltransferase TrmFO of Microcystis aeruginosa (strain NIES-843 / IAM M-2473).